A 66-amino-acid polypeptide reads, in one-letter code: Large ribosomal subunit protein bL33c (66 aa).

Belongs to the bacterial ribosomal protein bL33 family.

It localises to the plastid. The protein resides in the chloroplast. The sequence is that of Large ribosomal subunit protein bL33c from Glycine max (Soybean).